Here is a 370-residue protein sequence, read N- to C-terminus: Prolactin-releasing peptide receptor (370 aa).

Topologically, residues 1–62 (MASSTTRGPR…LQLVHQLKGL (62 aa)) are extracellular. Residues asparagine 27 and asparagine 36 are each glycosylated (N-linked (GlcNAc...) asparagine). The helical transmembrane segment at 63–83 (IVLLYSVVVVVGLVGNCLLVL) threads the bilayer. Residues 84-101 (VIARVRRLHNVTNFLIGN) lie on the Cytoplasmic side of the membrane. Residues 102 to 122 (LALSDVLMCTACVPLTLAYAF) form a helical membrane-spanning segment. The Extracellular portion of the chain corresponds to 123 to 126 (EPRG). A helical transmembrane segment spans residues 127–147 (WVFGGGLCHLVFFLQPVTVYV). Cysteines 134 and 211 form a disulfide. The Cytoplasmic portion of the chain corresponds to 148–175 (SVFTLTTIAVDRYVVLVHPLRRRISLRL). A helical membrane pass occupies residues 176–196 (SAYAVLAIWALSAVLALPAAV). The Extracellular segment spans residues 197–225 (HTYHVELKPHDVRLCEEFWGSQERQRQLY). Residues 226 to 246 (AWGLLLVTYLLPLLVILLSYV) traverse the membrane as a helical segment. At 247–276 (RVSVKLRNRVVPGCVTQSQADWDRARRRRT) the chain is on the cytoplasmic side. Residues 277-297 (FCLLVVIVVVFAVCWLPLHVF) form a helical membrane-spanning segment. Over 298-317 (NLLRDLDPHAIDPYAFGLVQ) the chain is Extracellular. The helical transmembrane segment at 318–338 (LLCHWLAMSSACYNPFIYAWL) threads the bilayer. At 339–369 (HDSFREELRKLLVAWPRKIAPHGQNMTVSVV) the chain is on the cytoplasmic side. The required for interaction with GRIP1, GRIP2 and PICK1 stretch occupies residues 365 to 370 (TVSVVI).

This sequence belongs to the G-protein coupled receptor 1 family. Interacts through its C-terminal region with the PDZ domain-containing proteins GRIP1, GRIP2 and PICK1. Interacts with PDZ domains 4 and 5 of GRIP1 and with the PDZ domain of PICK1. As to expression, only detected in the pituitary gland and in all cell types of pituitary adenomas.

The protein localises to the cell membrane. Functionally, receptor for prolactin-releasing peptide (PrRP). Implicated in lactation, regulation of food intake and pain-signal processing. The polypeptide is Prolactin-releasing peptide receptor (PRLHR) (Homo sapiens (Human)).